We begin with the raw amino-acid sequence, 99 residues long: MAAAAASRGIGAKLGLREIRIHLCQRSPGSQGVRDFIEKRYVELKKANPDLPILIRECSDVQPKLWARYAFGQEKNVPLNNFSADQVTRALENVLSGKA.

N-acetylalanine is present on alanine 2. Cysteine 24 and cysteine 58 are oxidised to a cystine. N6-acetyllysine; alternate is present on lysine 64. Position 64 is an N6-succinyllysine; alternate (lysine 64). Lysine 75 carries the post-translational modification N6-acetyllysine.

Belongs to the complex I NDUFA2 subunit family. As to quaternary structure, complex I is composed of 45 different subunits.

The protein localises to the mitochondrion inner membrane. Its function is as follows. Accessory subunit of the mitochondrial membrane respiratory chain NADH dehydrogenase (Complex I), that is believed not to be involved in catalysis. Complex I functions in the transfer of electrons from NADH to the respiratory chain. The immediate electron acceptor for the enzyme is believed to be ubiquinone. The sequence is that of NADH dehydrogenase [ubiquinone] 1 alpha subcomplex subunit 2 (NDUFA2) from Macaca fascicularis (Crab-eating macaque).